We begin with the raw amino-acid sequence, 121 residues long: Securin (121 aa).

The tract at residues 1–24 (RATEKSVKTNGPLKQKQTTFSAKK) is disordered. Short sequence motifs (TEK-box) lie at residues 3–5 (TEK) and 26–28 (TEK). Residues 93 to 121 (LGPPSPLNMPSPPWESDVLQSPSSILSTL) are disordered. Residues 95 to 105 (PPSPLNMPSPP) carry the SH3-binding motif. A compositionally biased stretch (pro residues) spans 95–105 (PPSPLNMPSPP). S97 is modified (phosphoserine; by CDK1). The span at 110–121 (VLQSPSSILSTL) shows a compositional bias: polar residues.

Belongs to the securin family. In terms of assembly, interacts with the caspase-like ESPL1, and prevents its protease activity probably by covering its active site. Interacts with p53/TP53 and blocks its activity probably by blocking its binding to DNA. Interacts with the Ku 70 kDa subunit of ds-DNA kinase. Interacts with PTTG1IP. Interacts with RPS10 and DNAJA1. Post-translationally, phosphorylated by CDK1 during mitosis. In terms of processing, phosphorylated in vitro by ds-DNA kinase. Ubiquitinated through 'Lys-11' linkage of ubiquitin moieties by the anaphase promoting complex (APC) at the onset of anaphase, conducting to its degradation. 'Lys-11'-linked ubiquitination is mediated by the E2 ligase UBE2C/UBCH10.

It localises to the cytoplasm. Its subcellular location is the nucleus. Functionally, regulatory protein, which plays a central role in chromosome stability, in the p53/TP53 pathway, and DNA repair. Probably acts by blocking the action of key proteins. During the mitosis, it blocks Separase/ESPL1 function, preventing the proteolysis of the cohesin complex and the subsequent segregation of the chromosomes. At the onset of anaphase, it is ubiquitinated, conducting to its destruction and to the liberation of ESPL1. Its function is however not limited to a blocking activity, since it is required to activate ESPL1. Negatively regulates the transcriptional activity and related apoptosis activity of p53/TP53. The negative regulation of p53/TP53 may explain the strong transforming capability of the protein when it is overexpressed. May also play a role in DNA repair via its interaction with Ku, possibly by connecting DNA damage-response pathways with sister chromatid separation. This is Securin (PTTG1) from Sus scrofa (Pig).